The following is a 103-amino-acid chain: Large ribosomal subunit protein eL14 (103 aa).

It belongs to the eukaryotic ribosomal protein eL14 family.

The polypeptide is Large ribosomal subunit protein eL14 (Pyrobaculum calidifontis (strain DSM 21063 / JCM 11548 / VA1)).